Here is a 223-residue protein sequence, read N- to C-terminus: MDSVLNGRQSRQSLDAPSEPILIGLSGPSCSGKNTASTILQDYGFYCIDADAVSRKVFTEHEKEILNLFQAEAEKRGINLKNENGIDKKAFALLVFSDEELLKKHEAFILPIIEEKIWEEIKRAFTEKPERPILLNAPTLHKTSFIKKCLFILYIDAPFILRLIRAKKRDRLPLKNIWLRFSKQKKFFSQYFFLNADTIVVKNFWSSASLKRKLLQEVKKRGF.

One can recognise a DPCK domain in the interval 22 to 223 (LIGLSGPSCS…LLQEVKKRGF (202 aa)). 30–35 (CSGKNT) is a binding site for ATP.

This sequence belongs to the CoaE family.

The protein resides in the cytoplasm. The enzyme catalyses 3'-dephospho-CoA + ATP = ADP + CoA + H(+). Its pathway is cofactor biosynthesis; coenzyme A biosynthesis; CoA from (R)-pantothenate: step 5/5. Its function is as follows. Catalyzes the phosphorylation of the 3'-hydroxyl group of dephosphocoenzyme A to form coenzyme A. The sequence is that of Dephospho-CoA kinase from Treponema denticola (strain ATCC 35405 / DSM 14222 / CIP 103919 / JCM 8153 / KCTC 15104).